The primary structure comprises 637 residues: Chaperone protein HtpG (637 aa).

The segment at 1–347 (MTQSVHAETH…SNDLPLNVSR (347 aa)) is a; substrate-binding. The b stretch occupies residues 348-564 (EILQDNKVTV…NHGMSTQMIK (217 aa)). The c stretch occupies residues 565 to 637 (LMRAAGQPVP…SRINRLLLQA (73 aa)).

This sequence belongs to the heat shock protein 90 family. As to quaternary structure, homodimer.

It localises to the cytoplasm. Functionally, molecular chaperone. Has ATPase activity. The sequence is that of Chaperone protein HtpG from Aeromonas salmonicida (strain A449).